Here is a 151-residue protein sequence, read N- to C-terminus: FAD synthase (151 aa).

Residues Thr12 to Phe13, His17 to His20, Asp97, and Tyr125 each bind ATP.

The protein belongs to the archaeal FAD synthase family. In terms of assembly, homodimer. The cofactor is a divalent metal cation.

It carries out the reaction FMN + ATP + H(+) = FAD + diphosphate. It participates in cofactor biosynthesis; FAD biosynthesis; FAD from FMN: step 1/1. Catalyzes the transfer of the AMP portion of ATP to flavin mononucleotide (FMN) to produce flavin adenine dinucleotide (FAD) coenzyme. This chain is FAD synthase, found in Methanococcus vannielii (strain ATCC 35089 / DSM 1224 / JCM 13029 / OCM 148 / SB).